The chain runs to 283 residues: Elongation factor Ts (283 aa).

Residues 80–83 (TDFV) form an involved in Mg(2+) ion dislocation from EF-Tu region.

It belongs to the EF-Ts family.

Its subcellular location is the cytoplasm. Functionally, associates with the EF-Tu.GDP complex and induces the exchange of GDP to GTP. It remains bound to the aminoacyl-tRNA.EF-Tu.GTP complex up to the GTP hydrolysis stage on the ribosome. This chain is Elongation factor Ts, found in Salmonella choleraesuis (strain SC-B67).